A 192-amino-acid polypeptide reads, in one-letter code: Anthrone oxygenase (192 aa).

The next 3 membrane-spanning stretches (helical) occupy residues 12-32, 54-74, and 86-106; these read IVTG…TVPV, GHIS…YIAA, and AALV…VMSS. 3 N-linked (GlcNAc...) asparagine glycosylation sites follow: Asn130, Asn138, and Asn147. Residues 172 to 192 traverse the membrane as a helical segment; sequence MHLVRSLFPLMAAVLGVGICV.

It belongs to the anthrone oxygenase family.

It localises to the membrane. The enzyme catalyses emodin anthrone + O2 = emodin + H2O + H(+). Its pathway is secondary metabolite biosynthesis. In terms of biological role, anthrone oxygenase; part of the gene cluster that mediates the biosynthesis of monodictyphenone, a prenyl xanthone derivative. The pathway begins with the synthesis of atrochrysone thioester by the polyketide synthase (PKS) mdpG. The atrochrysone carboxyl ACP thioesterase mdpF then breaks the thioester bond and releases the atrochrysone carboxylic acid from mdpG. The atrochrysone carboxylic acid is then converted to atrochrysone which is further transformed into emodin anthrone by mdpH-1 and mdpH-2. Emodin is further modified to yield monodictyphenone via several steps involving mdpB, mdpC mdpJ, mdpK and mdpL. These enzymes with xptA, xptB and xptC are also proposed to be involved in the synthesis of shamixanthone from emodin. Especially, direct reduction of emodin by the short chain dehydrogenase mdpC followed by dehydration catalyzed by the scytalone dehydratase-like protein mdpB gives loss of oxygen and formation of chrysophanol intermediate in two simple steps. The sequence is that of Anthrone oxygenase from Emericella nidulans (strain FGSC A4 / ATCC 38163 / CBS 112.46 / NRRL 194 / M139) (Aspergillus nidulans).